Here is a 487-residue protein sequence, read N- to C-terminus: 6-phosphogluconate dehydrogenase, decarboxylating 1, chloroplastic (487 aa).

Met1 bears the N-acetylmethionine mark. Residues 13 to 18, 36 to 38, 80 to 82, and Asn108 each bind NADP(+); these read GLAVMG, NRT, and VKA. Residues Asn108 and 134–136 contribute to the substrate site; that span reads SGG. Lys188 (proton acceptor) is an active-site residue. Position 191–192 (191–192) interacts with substrate; it reads HN. Glu195 acts as the Proton donor in catalysis. Positions 196, 266, 293, 458, and 464 each coordinate substrate.

Belongs to the 6-phosphogluconate dehydrogenase family. As to quaternary structure, forms homodimer. Forms heterodimers with PGD2 or PGD3.

It is found in the plastid. The protein localises to the chloroplast. The protein resides in the cytoplasm. Its subcellular location is the cytosol. The catalysed reaction is 6-phospho-D-gluconate + NADP(+) = D-ribulose 5-phosphate + CO2 + NADPH. It participates in carbohydrate degradation; pentose phosphate pathway; D-ribulose 5-phosphate from D-glucose 6-phosphate (oxidative stage): step 3/3. In terms of biological role, catalyzes the oxidative decarboxylation of 6-phosphogluconate to ribulose 5-phosphate and CO(2), with concomitant reduction of NADP to NADPH. This Arabidopsis thaliana (Mouse-ear cress) protein is 6-phosphogluconate dehydrogenase, decarboxylating 1, chloroplastic.